A 767-amino-acid polypeptide reads, in one-letter code: Protein SQS1 (767 aa).

Basic residues predominate over residues 1–34; the sequence is MAKRHKHFEGRGRGGSRGRGRGRGGSRGRGRGGS. Disordered regions lie at residues 1-71, 101-127, 147-258, 363-387, and 466-494; these read MAKR…FNFA, SMKM…ARPV, RSKN…STVK, KNSS…DPEF, and EEPP…EIGD. Residues 35-45 are compositionally biased toward gly residues; it reads RSRGAGRGGFG. Residues 173–239 show a composition bias toward acidic residues; that stretch reads ESGTEEEIEE…LFFIDEEGYN (67 aa). Positions 245–254 are enriched in polar residues; the sequence is TVPSVSISED. A compositionally biased stretch (acidic residues) spans 481 to 493; that stretch reads TSEEESDNDSEIG. Positions 589 to 652 constitute an R3H domain; it reads GLHVLNIKEE…QTHIFVQKVK (64 aa). One can recognise a G-patch domain in the interval 716-763; it reads RNNIGRILLERLGWSEGEGLGIQGNKGISEPVFAVVKKSKTGLRHERK.

The protein belongs to the SQS1 family.

The protein resides in the cytoplasm. It localises to the nucleus. Functionally, may be involved in splicing. This chain is Protein SQS1 (SQS1), found in Vanderwaltozyma polyspora (strain ATCC 22028 / DSM 70294 / BCRC 21397 / CBS 2163 / NBRC 10782 / NRRL Y-8283 / UCD 57-17) (Kluyveromyces polysporus).